We begin with the raw amino-acid sequence, 208 residues long: Large ribosomal subunit protein uL4 (208 aa).

The disordered stretch occupies residues 45-95 (RQGTHKAKTRSEVRGGGKKPFRQKGTGNARQGSSRSPIHVGGGTIFGPQPH). Residues 69–80 (GTGNARQGSSRS) show a composition bias toward polar residues.

This sequence belongs to the universal ribosomal protein uL4 family. As to quaternary structure, part of the 50S ribosomal subunit.

Functionally, one of the primary rRNA binding proteins, this protein initially binds near the 5'-end of the 23S rRNA. It is important during the early stages of 50S assembly. It makes multiple contacts with different domains of the 23S rRNA in the assembled 50S subunit and ribosome. In terms of biological role, forms part of the polypeptide exit tunnel. The sequence is that of Large ribosomal subunit protein uL4 from Chlorobium chlorochromatii (strain CaD3).